The chain runs to 265 residues: Small ribosomal subunit protein uS2 (265 aa).

This sequence belongs to the universal ribosomal protein uS2 family.

The sequence is that of Small ribosomal subunit protein uS2 from Microcystis aeruginosa (strain NIES-843 / IAM M-2473).